The sequence spans 805 residues: MGMVLFACLLLLIIFPTCGYAAINTSSPLSIRQTLSSPGGFYELGFFSPNNTQNQYVGIWFKKIVPRVVVWVANRDTPVTSSAANLTISSNGSLILLDGKQDVIWSTGKAFTSNKCHAELLDTGNFVVIDDVSGNKLWQSFEHLGNTMLPQSSLMYDTSNGKKRVLTTWKSNSDPSPGEFSLEITPQIPTQGLIRRGSVPYWRCGPWAKTRFSGISGIDASYVSPFSVVQDTAAGTGSFSYSTLRNYNLSYVTLTPEGKMKILWDDGNNWKLHLSLPENPCDLYGRCGPYGLCVRSDPPKCECLKGFVPKSDEEWGKGNWTSGCVRRTKLSCQAKSSMKTQGKDTDIFYRMTDVKTPDLHQFASFLNAEQCYQGCLGNCSCTAFAYISGIGCLVWNGELADTVQFLSSGEFLFIRLASSELAGSSRRKIIVGTTVSLSIFLILVFAAIMLWRYRAKQNDAWKNGFERQDVSGVNFFEMHTIRTATNNFSPSNKLGQGGFGPVYKGKLVDGKEIGVKRLASSSGQGTEEFMNEITLISKLQHRNLVRLLGYCIDGEEKLLIYEFMVNKSLDIFIFDPCLKFELDWPKRFNIIQGIARGLLYLHRDSRLRVIHRDLKVSNILLDDRMNPKISDFGLARMFQGTQYQDNTRRVVGTLGYMSPEYAWAGLFSEKSDIYSFGVLMLEIISGKRISRFIYGDESKGLLAYTWDSWCETGGSNLLDRDLTDTCQAFEVARCVQIGLLCVQHEAVDRPNTLQVLSMLTSATDLPVPKQPIFAVHTLNDMPMLQANSQDFLSVNEMTESMIQGR.

The first 21 residues, 1-21 (MGMVLFACLLLLIIFPTCGYA), serve as a signal peptide directing secretion. Residues 22-141 (AINTSSPLSI…VSGNKLWQSF (120 aa)) enclose the Bulb-type lectin domain. The Extracellular portion of the chain corresponds to 22 to 428 (AINTSSPLSI…SELAGSSRRK (407 aa)). Residues N24, N50, N85, N91, and N248 are each glycosylated (N-linked (GlcNAc...) asparagine). An EGF-like domain is found at 277-313 (PENPCDLYGRCGPYGLCVRSDPPKCECLKGFVPKSDE). 2 cysteine pairs are disulfide-bonded: C281–C293 and C287–C301. N-linked (GlcNAc...) asparagine glycans are attached at residues N319 and N378. In terms of domain architecture, PAN spans 332 to 418 (CQAKSSMKTQ…GEFLFIRLAS (87 aa)). Disulfide bonds link C371–C392 and C375–C381. The chain crosses the membrane as a helical span at residues 429–449 (IIVGTTVSLSIFLILVFAAIM). Residues 450–805 (LWRYRAKQND…EMTESMIQGR (356 aa)) are Cytoplasmic-facing. Positions 488 to 773 (FSPSNKLGQG…DLPVPKQPIF (286 aa)) constitute a Protein kinase domain. ATP-binding positions include 494 to 502 (LGQGGFGPV) and K516. Residues S522 and S537 each carry the phosphoserine modification. Residues 577 to 594 (CLKFELDWPKRFNIIQGI) form a caM-binding region. A Phosphotyrosine modification is found at Y600. The active-site Proton acceptor is D613. A phosphoserine mark is found at S617 and S630. Position 647 is a phosphothreonine (T647). 2 positions are modified to phosphoserine: S690 and S793.

It belongs to the protein kinase superfamily. Ser/Thr protein kinase family. As to quaternary structure, interacts with PUB9, PUB13, PUB14, PUB29, PUB38, PUB44 and PUB45. Interacts with PBL34, PBL35 and PBL36. In terms of processing, autophosphorylated at Tyr-600. Autophosphorylation at Tyr-600 is required for downstream phosphorylation of the receptor-like cytoplasmic kinase PBL34, PBL35 and PBL36, and activation of plant immunity.

Its subcellular location is the cell membrane. It carries out the reaction L-seryl-[protein] + ATP = O-phospho-L-seryl-[protein] + ADP + H(+). The catalysed reaction is L-threonyl-[protein] + ATP = O-phospho-L-threonyl-[protein] + ADP + H(+). It catalyses the reaction L-tyrosyl-[protein] + ATP = O-phospho-L-tyrosyl-[protein] + ADP + H(+). Its function is as follows. S-domain receptor protein kinase involved in lipopolysaccharide (LPS) sensing. Specifically detects LPS of Pseudomonas and Xanthomonas species. LPS are major components of the outer membrane of Gram-negative bacteria and are important microbe-associated molecular patterns (MAMPs) that trigger biphasic production of reactive oxygen species (ROS) and immune responses in plants. Seems to be only partially associated with the second LPS-triggered ROS burst. Mediates defense signaling in response to the medium-chain 3-hydroxy fatty acid 3-OH-C10:0, a pathogen-associated molecular pattern (PAMP) which induces autophosphorylation at Tyr-600. Autophosphorylation at Tyr-600 is required for downstream phosphorylation of the receptor-like cytoplasmic kinase PBL34, PBL35 and PBL36, and activation of plant immunity. Functionally, (Microbial infection) Targeted by the bacterial type III effector protein tyrosine phosphatase HopAO1 from Pseudomonas syringae. HopAO1 dephosphorylates Tyr-600, which suppresses the immune response. In Arabidopsis thaliana (Mouse-ear cress), this protein is G-type lectin S-receptor-like serine/threonine-protein kinase SD1-29.